A 269-amino-acid chain; its full sequence is Thyroxine 5-deiodinase (269 aa).

The Cytoplasmic portion of the chain corresponds to 1-14 (MLPAPHTCCRLLQQ). A helical; Signal-anchor for type II membrane protein transmembrane segment spans residues 15–35 (LLACCLLLPRFLLTVLLLWLL). The Extracellular portion of the chain corresponds to 36–269 (DFPCVRRRVI…TGNGALVIQV (234 aa)). Sec133 is an active-site residue. Position 133 (Sec133) is a non-standard amino acid, selenocysteine.

This sequence belongs to the iodothyronine deiodinase family. Monomer. Homodimer. May undergo minor heretodimerization with DIO1 and DIO2.

The protein localises to the cell membrane. It is found in the endosome membrane. The enzyme catalyses 3,3',5'-triiodo-L-thyronine + iodide + A + H(+) = L-thyroxine + AH2. It catalyses the reaction 3,3'-diiodo-L-thyronine + iodide + A + H(+) = 3,3',5-triiodo-L-thyronine + AH2. It carries out the reaction 3-iodo-L-thyronine + iodide + A + H(+) = 3,5-diiodo-L-thyronine + AH2. The catalysed reaction is L-thyronine + iodide + A + H(+) = 3-iodo-L-thyronine + AH2. The enzyme catalyses 3',5'-diiodo-L-thyronine + iodide + A + H(+) = 3,3',5'-triiodo-L-thyronine + AH2. It catalyses the reaction 3'-iodo-L-thyronine + iodide + A + H(+) = 3,3'-diiodo-L-thyronine + AH2. It carries out the reaction 3,3',5'-triiodothyronamine + iodide + A + H(+) = 3,3',5,5'-tetraiodothyronamine + AH2. The catalysed reaction is 3',5'-diiodothyronamine + iodide + A + H(+) = 3,3',5'-triiodothyronamine + AH2. The enzyme catalyses 3,3'-diiodothyronamine + iodide + A + H(+) = 3,3',5-triiodothyronamine + AH2. It catalyses the reaction 3-iodothyronamine + iodide + A + H(+) = 3,5-diiodothyronamine + AH2. It carries out the reaction 3'-iodothyronamine + iodide + A + H(+) = 3,3'-diiodothyronamine + AH2. The catalysed reaction is thyronamine + iodide + A + H(+) = 3-iodothyronamine + AH2. Functionally, plays a crucial role in the metabolism of thyroid hormones (TH) and has specific roles in TH activation and inactivation by deiodination. Catalyzes the deiodination of L-thyroxine (T4) to 3,3',5'-triiodothyronine (rT3), 3,5-diiodothyronine (3,5-T2) to 3-monoiodothyronine (3-T1), rT3 to 3',5'-diiodothyronine (3',5'-T2) and 3,3'-diiodothyronine (3,3'-T2) to 3'-monoiodothyronine (3'-T1) via inner-ring deiodination (IRD). Catalyzes the deiodination of 3,5,3'-triiodothyronine (T3) to 3,3'-diiodothyronine (3,3'-T2) via IRD. Catalyzes the deiodination of 3-T1 to L-thyronine (T0) via outer-ring deiodination (ORD). Catalyzes the tyrosyl ring deiodinations of 3,3',5,5'-tetraiodothyronamine, 3,3',5'-triiodothyronamine, 3,5,3'-triiodothyronamine, 3,5-diiodothyronamine, 3,3'-diiodothyronamine and 3-iodothyronamine. The polypeptide is Thyroxine 5-deiodinase (dio3) (Aquarana catesbeiana (American bullfrog)).